We begin with the raw amino-acid sequence, 736 residues long: 1,4-alpha-glucan branching enzyme GlgB (736 aa).

The active-site Nucleophile is the D417. Catalysis depends on E470, which acts as the Proton donor.

This sequence belongs to the glycosyl hydrolase 13 family. GlgB subfamily. As to quaternary structure, monomer.

The catalysed reaction is Transfers a segment of a (1-&gt;4)-alpha-D-glucan chain to a primary hydroxy group in a similar glucan chain.. Its pathway is glycan biosynthesis; glycogen biosynthesis. Its function is as follows. Catalyzes the formation of the alpha-1,6-glucosidic linkages in glycogen by scission of a 1,4-alpha-linked oligosaccharide from growing alpha-1,4-glucan chains and the subsequent attachment of the oligosaccharide to the alpha-1,6 position. The protein is 1,4-alpha-glucan branching enzyme GlgB of Pseudomonas putida (strain ATCC 47054 / DSM 6125 / CFBP 8728 / NCIMB 11950 / KT2440).